We begin with the raw amino-acid sequence, 167 residues long: NADH-ubiquinone oxidoreductase chain 6 (167 aa).

Helical transmembrane passes span 5–25, 34–54, 60–80, and 138–158; these read IIML…TIYL, MLLI…FTMC, LILM…SYFI, and FFIM…ITYI.

Belongs to the complex I subunit 6 family.

The protein resides in the mitochondrion membrane. It carries out the reaction a ubiquinone + NADH + 5 H(+)(in) = a ubiquinol + NAD(+) + 4 H(+)(out). Core subunit of the mitochondrial membrane respiratory chain NADH dehydrogenase (Complex I) that is believed to belong to the minimal assembly required for catalysis. Complex I functions in the transfer of electrons from NADH to the respiratory chain. The immediate electron acceptor for the enzyme is believed to be ubiquinone. The chain is NADH-ubiquinone oxidoreductase chain 6 (ND6) from Apis mellifera ligustica (Common honeybee).